Consider the following 689-residue polypeptide: MRRHKRWPLRSLVCSFSSSAAETVTTSTAASATAAFPLKHVTRSNFETTLNDLRSLVKAADFVAIDLEMTGVTSAPWRDSLEFDRYDVRYLKVKDSAEKFAVVQFGVCPFRWDSRTQSFVSYPHNFFVFPRQELTFDPPAHEFLCQTTSMDFLAKYQFDFNTCIHEGISYLSRREEEEASKRLKMLHGEDGIDSSGETEELKLVRLADVLFAARMEKLLNEWRSGLLHGGNASSEFPRISNGSNQSMETVFHHMRPALSLKGFTSHQLRVLNSVLRKHFGDLVYIHSNDKSSSSRDIVVYTDSDSDKENLMKEAKDERKRLAERKIQSAIGFRQVIDLLASEKKLIVGHNCFLDIAHVYSKFVGPLPSTAEKFVASINSHFPYIVDTKILLNVNPMLHQRMKKSSTSLSSAFSSLCPQIEFSSRSSDSFLQQRVNIDVEIDNVRCSNWNAGGKHEAGYDAFMTGCIFAQACNHLGFDFKQHSQLDDFAQNEKLEKYINRLYLSWTRGDIIDLRTGHSNADNWRVSKFKYENIVLIWNFPRKLKARGIKECICKAFGSASVTSVYHVDDSAVFVLFKNSELVWDFLALKRQLESSDGPVSVLHPLSKILEGGNTGAADYEAYKEICSSHVSEVMFSDQAETVGVKSRTRPNAQCETETREENTVTVTHKASDLIDAFLANRVEVETATSN.

Residues aspartate 66, glutamate 68, aspartate 354, and aspartate 459 each coordinate a divalent metal cation.

This sequence belongs to the CAF1 family. A divalent metal cation is required as a cofactor. In terms of tissue distribution, widely expressed. Expressed in roots, stems, leaves and flowers.

It localises to the nucleus. Its subcellular location is the cytoplasm. It carries out the reaction Exonucleolytic cleavage of poly(A) to 5'-AMP.. 3'-exoribonuclease that has a preference for poly(A) tails of mRNAs, thereby efficiently degrading poly(A) tails. Exonucleolytic degradation of the poly(A) tail is often the first step in the decay of eukaryotic mRNAs. Essential for early development, possibly by participating in silencing certain maternal mRNAs translationally. May have a pivotal role in stress response. This is Poly(A)-specific ribonuclease PARN (PARN) from Arabidopsis thaliana (Mouse-ear cress).